Here is a 291-residue protein sequence, read N- to C-terminus: m-AAA protease-interacting protein 1, mitochondrial (291 aa).

Residues 1–96 (MALAARLLPL…SLPASPIRSY (96 aa)) constitute a mitochondrion transit peptide.

As to quaternary structure, interacts with AFG3L2. Interacts with SPG7. Interacts with SMDT1/EMRE (via the N-terminal transit peptide); interaction is direct and takes place before maturation of SMDT1/EMRE.

It localises to the mitochondrion matrix. Its function is as follows. Promotes sorting of SMDT1/EMRE in mitochondria by ensuring its maturation. Interacts with the transit peptide region of SMDT1/EMRE precursor protein in the mitochondrial matrix, leading to protect it against protein degradation by YME1L1, thereby ensuring SMDT1/EMRE maturation by the mitochondrial processing peptidase (PMPCA and PMPCB). The sequence is that of m-AAA protease-interacting protein 1, mitochondrial from Rattus norvegicus (Rat).